The sequence spans 374 residues: Aminomethyltransferase (374 aa).

It belongs to the GcvT family. In terms of assembly, the glycine cleavage system is composed of four proteins: P, T, L and H.

It carries out the reaction N(6)-[(R)-S(8)-aminomethyldihydrolipoyl]-L-lysyl-[protein] + (6S)-5,6,7,8-tetrahydrofolate = N(6)-[(R)-dihydrolipoyl]-L-lysyl-[protein] + (6R)-5,10-methylene-5,6,7,8-tetrahydrofolate + NH4(+). In terms of biological role, the glycine cleavage system catalyzes the degradation of glycine. This Caldanaerobacter subterraneus subsp. tengcongensis (strain DSM 15242 / JCM 11007 / NBRC 100824 / MB4) (Thermoanaerobacter tengcongensis) protein is Aminomethyltransferase.